A 363-amino-acid chain; its full sequence is Ribosomal RNA large subunit methyltransferase M (363 aa).

Residues serine 194, 227–230 (CPGG), aspartate 246, aspartate 266, and aspartate 284 contribute to the S-adenosyl-L-methionine site. The active-site Proton acceptor is the lysine 313.

It belongs to the class I-like SAM-binding methyltransferase superfamily. RNA methyltransferase RlmE family. RlmM subfamily. As to quaternary structure, monomer.

The protein localises to the cytoplasm. It catalyses the reaction cytidine(2498) in 23S rRNA + S-adenosyl-L-methionine = 2'-O-methylcytidine(2498) in 23S rRNA + S-adenosyl-L-homocysteine + H(+). Its function is as follows. Catalyzes the 2'-O-methylation at nucleotide C2498 in 23S rRNA. This is Ribosomal RNA large subunit methyltransferase M from Haemophilus influenzae (strain PittGG).